A 505-amino-acid chain; its full sequence is Tyrosine-protein kinase Blk (505 aa).

Positions 1-37 (MGLVSSKKPDKEKPIKEKDKGQWSPLKVSAQDKDAPP) are disordered. G2 is lipidated: N-myristoyl glycine. Basic and acidic residues predominate over residues 7-21 (KKPDKEKPIKEKDKG). Positions 58–118 (EDKHFVVALY…PSNFVARVES (61 aa)) constitute an SH3 domain. Positions 124–220 (WFFRSQGRKE…GLCQRLTLPC (97 aa)) constitute an SH2 domain. In terms of domain architecture, Protein kinase spans 241 to 494 (LRLVRKLGSG…FLQSVLEDFY (254 aa)). Residues 247–255 (LGSGQFGEV) and K269 contribute to the ATP site. Residue D360 is the Proton acceptor of the active site. Y389 is modified (phosphotyrosine; by autocatalysis).

The protein belongs to the protein kinase superfamily. Tyr protein kinase family. SRC subfamily. In terms of assembly, interacts with CBL (via SH2 domain). Interacts with CD79A and CD79B (via SH2 domain). Phosphorylated on tyrosine residues after antibody-mediated surface engagement of the B-cell antigen receptor (BCR). Post-translationally, ubiquitination of activated BLK by the UBE3A ubiquitin protein ligase leads to its degradation by the ubiquitin-proteasome pathway. In terms of tissue distribution, expressed in lymphatic organs, pancreatic islets, Leydig cells, striate ducts of salivary glands and hair follicles.

The protein resides in the cell membrane. The enzyme catalyses L-tyrosyl-[protein] + ATP = O-phospho-L-tyrosyl-[protein] + ADP + H(+). Its activity is regulated as follows. Antibody-mediated surface engagement of the B-cell antigen receptor (BCR) which results in the phosphorylation of BLK on tyrosine residues, stimulates the enzymatic activity. Its function is as follows. Non-receptor tyrosine kinase involved in B-lymphocyte development, differentiation and signaling. B-cell receptor (BCR) signaling requires a tight regulation of several protein tyrosine kinases and phosphatases, and associated coreceptors. Binding of antigen to the B-cell antigen receptor (BCR) triggers signaling that ultimately leads to B-cell activation. Signaling through BLK plays an important role in transmitting signals through surface immunoglobulins and supports the pro-B to pre-B transition, as well as the signaling for growth arrest and apoptosis downstream of B-cell receptor. Specifically binds and phosphorylates CD79A at 'Tyr-188'and 'Tyr-199', as well as CD79B at 'Tyr-196' and 'Tyr-207'. Also phosphorylates the immunoglobulin G receptors FCGR2A, FCGR2B and FCGR2C. With FYN and LYN, plays an essential role in pre-B-cell receptor (pre-BCR)-mediated NF-kappa-B activation. Also contributes to BTK activation by indirectly stimulating BTK intramolecular autophosphorylation. In pancreatic islets, acts as a modulator of beta-cells function through the up-regulation of PDX1 and NKX6-1 and consequent stimulation of insulin secretion in response to glucose. Phosphorylates CGAS, promoting retention of CGAS in the cytosol. In Homo sapiens (Human), this protein is Tyrosine-protein kinase Blk (BLK).